Consider the following 992-residue polypeptide: ATP-dependent 6-phosphofructokinase subunit alpha (992 aa).

The N-terminal catalytic PFK domain 1 stretch occupies residues methionine 1 to valine 558. Residues glycine 193, arginine 256–serine 257, and glycine 286–serine 289 each bind ATP. Aspartate 287 is a binding site for Mg(2+). Beta-D-fructose 6-phosphate is bound by residues serine 332 to aspartate 334, arginine 369, methionine 376 to arginine 378, glutamate 433, lysine 460, and histidine 466 to arginine 469. Aspartate 334 serves as the catalytic Proton acceptor. Positions asparagine 559 to leucine 572 are interdomain linker. The interval asparagine 573–valine 992 is C-terminal regulatory PFK domain 2. Beta-D-fructose 2,6-bisphosphate contacts are provided by residues arginine 643, threonine 700 to asparagine 704, arginine 738, glutamine 745 to glycine 747, glutamate 805, arginine 831, histidine 837 to glutamine 840, and arginine 929.

This sequence belongs to the phosphofructokinase type A (PFKA) family. ATP-dependent PFK group I subfamily. Eukaryotic two domain clade 'E' sub-subfamily. Heterooctamer of 4 alpha and 4 beta chains. Mg(2+) serves as cofactor.

The protein localises to the cytoplasm. The catalysed reaction is beta-D-fructose 6-phosphate + ATP = beta-D-fructose 1,6-bisphosphate + ADP + H(+). Its pathway is carbohydrate degradation; glycolysis; D-glyceraldehyde 3-phosphate and glycerone phosphate from D-glucose: step 3/4. Allosterically activated by ADP, AMP, or fructose 2,6-bisphosphate, and allosterically inhibited by ATP or citrate. In terms of biological role, catalyzes the phosphorylation of D-fructose 6-phosphate to fructose 1,6-bisphosphate by ATP, the first committing step of glycolysis. This chain is ATP-dependent 6-phosphofructokinase subunit alpha (PFK1), found in Kluyveromyces lactis (strain ATCC 8585 / CBS 2359 / DSM 70799 / NBRC 1267 / NRRL Y-1140 / WM37) (Yeast).